We begin with the raw amino-acid sequence, 56 residues long: Large ribosomal subunit protein uL30 (56 aa).

It belongs to the universal ribosomal protein uL30 family. In terms of assembly, part of the 50S ribosomal subunit.

The protein is Large ribosomal subunit protein uL30 of Nitratidesulfovibrio vulgaris (strain ATCC 29579 / DSM 644 / CCUG 34227 / NCIMB 8303 / VKM B-1760 / Hildenborough) (Desulfovibrio vulgaris).